A 159-amino-acid chain; its full sequence is Transcriptional repressor NrdR (159 aa).

A zinc finger spans residues 3-34 (CPFCRHEDTQVVDSRVSEDGAAIRRRRRCSAC). An ATP-cone domain is found at 49–139 (PAVVKKDGSR…VYRRFEDVSE (91 aa)).

The protein belongs to the NrdR family. The cofactor is Zn(2+).

In terms of biological role, negatively regulates transcription of bacterial ribonucleotide reductase nrd genes and operons by binding to NrdR-boxes. The polypeptide is Transcriptional repressor NrdR (Burkholderia multivorans (strain ATCC 17616 / 249)).